The following is a 53-amino-acid chain: UPF0391 membrane protein BURPS1106A_A2993 (53 aa).

Helical transmembrane passes span 5–25 and 30–50; these read ALIF…GIAA and IAKI…VLGV.

This sequence belongs to the UPF0391 family.

Its subcellular location is the cell membrane. In Burkholderia pseudomallei (strain 1106a), this protein is UPF0391 membrane protein BURPS1106A_A2993.